The following is a 175-amino-acid chain: ATP-dependent protease subunit HslV (175 aa).

T5 is a catalytic residue. Residues G160, D163, and T166 each contribute to the Na(+) site.

The protein belongs to the peptidase T1B family. HslV subfamily. In terms of assembly, a double ring-shaped homohexamer of HslV is capped on each side by a ring-shaped HslU homohexamer. The assembly of the HslU/HslV complex is dependent on binding of ATP.

The protein localises to the cytoplasm. The catalysed reaction is ATP-dependent cleavage of peptide bonds with broad specificity.. With respect to regulation, allosterically activated by HslU binding. Functionally, protease subunit of a proteasome-like degradation complex believed to be a general protein degrading machinery. The protein is ATP-dependent protease subunit HslV of Myxococcus xanthus.